We begin with the raw amino-acid sequence, 804 residues long: Endoplasmin (804 aa).

A signal peptide spans 1–21; it reads MRALWVLGLCCVLLTFGSVRA. Residues 42–44 carry the SRT pseudosubstrate motif motif; it reads SRT. Asn-62 carries N-linked (GlcNAc...) asparagine glycosylation. Residue Ser-64 is modified to Phosphoserine. Asn-107 is a glycosylation site (N-linked (GlcNAc...) asparagine). The ATP site is built by Asn-107, Asp-149, and Asn-162. At Lys-168 the chain carries N6-(2-hydroxyisobutyryl)lysine. At Ser-172 the chain carries Phosphoserine. Phe-199 contacts ATP. An N-linked (GlcNAc...) asparagine glycan is attached at Asn-217. The tract at residues 288-323 is disordered; the sequence is TVEEPMEEEEAAKEEKEESDDEAAVEEEEEEKKPKT. Residues 289-317 show a composition bias toward acidic residues; it reads VEEPMEEEEAAKEEKEESDDEAAVEEEEE. Phosphoserine is present on residues Ser-306 and Ser-403. Lys-404 bears the N6-succinyllysine mark. N-linked (GlcNAc...) asparagine glycosylation is present at Asn-445. Ser-447 is modified (phosphoserine). At Lys-479 the chain carries N6-acetyllysine. Asn-481 and Asn-502 each carry an N-linked (GlcNAc...) asparagine glycan. Residue Lys-633 is modified to N6-succinyllysine. A disordered region spans residues 750 to 804; it reads DPDAKVEEEPEEEPEETTEDTTEDTEQDDDEEMDAGADEEEQETSETSTAEKDEL. A compositionally biased stretch (acidic residues) spans 757 to 793; that stretch reads EEPEEEPEETTEDTTEDTEQDDDEEMDAGADEEEQET. The short motif at 801 to 804 is the Prevents secretion from ER element; it reads KDEL.

The protein belongs to the heat shock protein 90 family. In terms of assembly, homodimer; disulfide-linked. Component of an EIF2 complex at least composed of CELF1/CUGBP1, CALR, CALR3, EIF2S1, EIF2S2, HSP90B1 and HSPA5. Part of a large chaperone multiprotein complex comprising DNAJB11, HSP90B1, HSPA5, HYOU, PDIA2, PDIA4, PDIA6, PPIB, SDF2L1, UGGT1 and very small amounts of ERP29, but not, or at very low levels, CALR nor CANX. Interacts with AIMP1; regulates its retention in the endoplasmic reticulum. Hyperglycosylated form interacts with OS9; promoting its degradation by the endoplasmic reticulum associated degradation (ERAD). Interacts with CNPY3. This interaction is disrupted in the presence of ATP. Interacts with TLR4 and TLR9, but not with TLR3. Interacts with MZB1 in a calcium-dependent manner. Interacts with METTL23. Interacts with IL1B; the interaction facilitates cargo translocation into the ERGIC. Interacts with EIF2AK3. Phosphorylated by CK2. Post-translationally, N-glycosylated cotranslationally at Asn-217 by STT3A-containing OST-A complex: this glycosylation is constitutive. In response to various stress, 5 additional facultative sites (Asn-62, Asn-107, Asn-445, Asn-481 and Asn-502) can be glycosylated post-translationally by STT3B-containing OST-B complex, leading to a hyperglycosylated form that is degraded by the ER-associated degradation (ERAD) pathway. In normal conditions, the OST-A complex together with CCDC134 prevent glycosylation at facultative sites during protein folding, thereby preventing hyperglycosylation. Mechanistically, nascent HSP90B1 is tethered during translation to a specialized CCDC134-containing translocon that forms a microenvironment for its folding, in which STT3A associates with the SRT pseudosubstrate motif, and prevents access to facultative glycosylation sites until folding is completed, rendering its facultative sites inaccessible to the OST-B complex.

Its subcellular location is the endoplasmic reticulum lumen. The protein localises to the sarcoplasmic reticulum lumen. It is found in the melanosome. It carries out the reaction ATP + H2O = ADP + phosphate + H(+). Its function is as follows. ATP-dependent chaperone involved in the processing of proteins in the endoplasmic reticulum, regulating their transport. Together with MESD, acts as a modulator of the Wnt pathway by promoting the folding of LRP6, a coreceptor of the canonical Wnt pathway. When associated with CNPY3, required for proper folding of Toll-like receptors. Promotes folding and trafficking of TLR4 to the cell surface. May participate in the unfolding of cytosolic leaderless cargos (lacking the secretion signal sequence) such as the interleukin 1/IL-1 to facilitate their translocation into the ERGIC (endoplasmic reticulum-Golgi intermediate compartment) and secretion; the translocation process is mediated by the cargo receptor TMED10. In Sus scrofa (Pig), this protein is Endoplasmin (HSP90B1).